The following is a 132-amino-acid chain: Small ribosomal subunit protein uS9 (132 aa).

The protein belongs to the universal ribosomal protein uS9 family.

The polypeptide is Small ribosomal subunit protein uS9 (Methanothrix thermoacetophila (strain DSM 6194 / JCM 14653 / NBRC 101360 / PT) (Methanosaeta thermophila)).